A 331-amino-acid chain; its full sequence is Thiamine-monophosphate kinase (331 aa).

Residues aspartate 43, threonine 59, threonine 60, and aspartate 61 each contribute to the Mg(2+) site. Histidine 68 is a substrate binding site. Aspartate 90, aspartate 138, and aspartate 231 together coordinate Mg(2+). Position 137 to 138 (137 to 138 (GD)) interacts with ATP. Serine 233 is an ATP binding site. Aspartate 234 is a binding site for Mg(2+). 2 residues coordinate substrate: glutamate 284 and tryptophan 328.

This sequence belongs to the thiamine-monophosphate kinase family.

The enzyme catalyses thiamine phosphate + ATP = thiamine diphosphate + ADP. It participates in cofactor biosynthesis; thiamine diphosphate biosynthesis; thiamine diphosphate from thiamine phosphate: step 1/1. In terms of biological role, catalyzes the ATP-dependent phosphorylation of thiamine-monophosphate (TMP) to form thiamine-pyrophosphate (TPP), the active form of vitamin B1. The polypeptide is Thiamine-monophosphate kinase (Corynebacterium glutamicum (strain ATCC 13032 / DSM 20300 / JCM 1318 / BCRC 11384 / CCUG 27702 / LMG 3730 / NBRC 12168 / NCIMB 10025 / NRRL B-2784 / 534)).